The following is a 259-amino-acid chain: MQLQLICEDPSQQSHLDELAARWQLSHTDDSDFALVLTTERLELRKVDEPKLGAIFVDLIGGAVGHRRKFGGGKGQAIAKAAGLNKGATPTVLDGTAGLGRDAFVLASLGCKVQMVERHPVVAALLDDGLARAKHDPEIGTWVSERMSLIHASSHDALEQLAQDKDFLQPDVVYLDPMYPHPENKKKSALVKKEMRVFQSLVGADLDADGLLAPAMALASKRVVVKRPDYADWLDEQKPSMAIETKKNRFDVYVKASMA.

Residues 101–102, 117–118, 153–154, and Asp176 each bind S-adenosyl-L-methionine; these read RD, ER, and SS.

It belongs to the methyltransferase superfamily. RsmJ family.

It is found in the cytoplasm. The catalysed reaction is guanosine(1516) in 16S rRNA + S-adenosyl-L-methionine = N(2)-methylguanosine(1516) in 16S rRNA + S-adenosyl-L-homocysteine + H(+). Its function is as follows. Specifically methylates the guanosine in position 1516 of 16S rRNA. The sequence is that of Ribosomal RNA small subunit methyltransferase J from Vibrio campbellii (strain ATCC BAA-1116).